We begin with the raw amino-acid sequence, 562 residues long: Probable sesquiterpene synthase (562 aa).

Aspartate 315, aspartate 319, and glutamate 467 together coordinate Mg(2+). A DDXXD motif motif is present at residues 315-319; it reads DDIYD.

Belongs to the terpene synthase family. Tpsa subfamily. It depends on Mg(2+) as a cofactor. Mn(2+) is required as a cofactor.

Its function is as follows. Sesquiterpene synthase. The chain is Probable sesquiterpene synthase (SesquiTPS) from Santalum austrocaledonicum (Sandalwood).